The chain runs to 122 residues: Large ribosomal subunit protein uL14 (122 aa).

The protein belongs to the universal ribosomal protein uL14 family. As to quaternary structure, part of the 50S ribosomal subunit. Forms a cluster with proteins L3 and L19. In the 70S ribosome, L14 and L19 interact and together make contacts with the 16S rRNA in bridges B5 and B8.

Its function is as follows. Binds to 23S rRNA. Forms part of two intersubunit bridges in the 70S ribosome. This is Large ribosomal subunit protein uL14 from Mycobacterium tuberculosis (strain ATCC 25177 / H37Ra).